We begin with the raw amino-acid sequence, 109 residues long: Large ribosomal subunit protein P1A (109 aa).

Positions 69 to 84 are enriched in low complexity; that stretch reads APVAGGAAAPAAADGE. The disordered stretch occupies residues 69–109; that stretch reads APVAGGAAAPAAADGEAPAEEKEEAKEEEESDEDMGFGLFD. The segment covering 94–103 has biased composition (acidic residues); sequence KEEEESDEDM.

The protein belongs to the eukaryotic ribosomal protein P1/P2 family. As to quaternary structure, component of the large ribosomal subunit (LSU). Mature yeast ribosomes consist of a small (40S) and a large (60S) subunit. The 40S small subunit contains 1 molecule of ribosomal RNA (18S rRNA) and at least 33 different proteins. The large 60S subunit contains 3 rRNA molecules (25S, 5.8S and 5S rRNA) and at least 46 different proteins. The acidic ribosomal P-proteins form the stalk structure of the 60S subunit. They are organized as a pentameric complex in which uL10/P0 interacts with 2 heterodimers of P1 and P2 proteins.

The protein resides in the cytoplasm. Its function is as follows. Component of the ribosome, a large ribonucleoprotein complex responsible for the synthesis of proteins in the cell. The small ribosomal subunit (SSU) binds messenger RNAs (mRNAs) and translates the encoded message by selecting cognate aminoacyl-transfer RNA (tRNA) molecules. The large subunit (LSU) contains the ribosomal catalytic site termed the peptidyl transferase center (PTC), which catalyzes the formation of peptide bonds, thereby polymerizing the amino acids delivered by tRNAs into a polypeptide chain. The nascent polypeptides leave the ribosome through a tunnel in the LSU and interact with protein factors that function in enzymatic processing, targeting, and the membrane insertion of nascent chains at the exit of the ribosomal tunnel. The polypeptide is Large ribosomal subunit protein P1A (rpp101) (Schizosaccharomyces pombe (strain 972 / ATCC 24843) (Fission yeast)).